Consider the following 264-residue polypeptide: Rano class II histocompatibility antigen, D-1 beta chain (264 aa).

Residues 1-26 (MVWLARDSCVAAVILLLTVLSPPVAL) form the signal peptide. The segment at 27 to 120 (VRDPTPRFLE…EISESFLVPR (94 aa)) is beta-1. Topologically, residues 27 to 226 (VRDPTPRFLE…AQSTSAQNKK (200 aa)) are extracellular. 2 cysteine pairs are disulfide-bonded: C42–C106 and C144–C200. N46 is a glycosylation site (N-linked (GlcNAc...) asparagine). Positions 121-215 (TVEPKVTVYP…SLPSPVRVEW (95 aa)) are beta-2. The 105-residue stretch at 124–228 (PKVTVYPSKT…STSAQNKKMS (105 aa)) folds into the Ig-like C1-type domain. The connecting peptide stretch occupies residues 216-226 (KAQSTSAQNKK). A helical membrane pass occupies residues 227 to 248 (MSGVGGIVLGLLFLGAGLFVYF). Residues 249–264 (RNQKGQSGLQPTGLLN) lie on the Cytoplasmic side of the membrane.

The protein belongs to the MHC class II family.

Its subcellular location is the membrane. In terms of biological role, involved in the presentation of foreign antigens to the immune system. The polypeptide is Rano class II histocompatibility antigen, D-1 beta chain (RT1-Db1) (Rattus norvegicus (Rat)).